The chain runs to 443 residues: Probable lysophospholipase BODYGUARD 5 (443 aa).

The signal sequence occupies residues 1-52 (MITSSFSEKCTSVINGAPSWAVFFLFDLLDYFLCIVFRFLDEVMEEKSESCH). The N-palmitoyl cysteine moiety is linked to residue Cys-53. The region spanning 163–268 (VIFVHGFLAS…VKSVALVAPP (106 aa)) is the AB hydrolase-1 domain. The active site involves His-167. Ser-242 functions as the Nucleophile in the catalytic mechanism. Residues Asp-387 and His-415 each act as charge relay system in the active site.

The protein localises to the cell membrane. Its subcellular location is the secreted. It is found in the cell wall. In terms of biological role, involved in cuticle development and morphogenesis. This Arabidopsis thaliana (Mouse-ear cress) protein is Probable lysophospholipase BODYGUARD 5.